The sequence spans 566 residues: Phenylalanine--tRNA ligase beta subunit (566 aa).

Positions 287–362 (YFQEEVEFDV…IGEGLASFYP (76 aa)) constitute a B5 domain. Mg(2+) is bound by residues D340, D346, E349, and D350.

The protein belongs to the phenylalanyl-tRNA synthetase beta subunit family. Type 2 subfamily. In terms of assembly, tetramer of two alpha and two beta subunits. Mg(2+) is required as a cofactor.

The protein localises to the cytoplasm. The enzyme catalyses tRNA(Phe) + L-phenylalanine + ATP = L-phenylalanyl-tRNA(Phe) + AMP + diphosphate + H(+). The chain is Phenylalanine--tRNA ligase beta subunit from Borrelia garinii subsp. bavariensis (strain ATCC BAA-2496 / DSM 23469 / PBi) (Borreliella bavariensis).